Reading from the N-terminus, the 119-residue chain is C-C motif chemokine 24 (119 aa).

The N-terminal stretch at 1–26 (MAGSATIVAGLLLLVACACCIFPIDS) is a signal peptide. Disulfide bonds link cysteine 33/cysteine 58 and cysteine 34/cysteine 74. Residues asparagine 54 and asparagine 115 are each glycosylated (N-linked (GlcNAc...) asparagine). A disordered region spans residues 96–119 (PSKGAKAVRTKFAVQRRRGNSTEV). The segment covering 101-119 (KAVRTKFAVQRRRGNSTEV) has biased composition (basic residues).

The protein belongs to the intercrine beta (chemokine CC) family. Highest expression in jejunum and spleen. Lower levels found in liver and lung. No expression detected in kidney, thymus, brain or testis.

The protein localises to the secreted. Its function is as follows. Chemotactic for resting T-lymphocytes, and eosinophils. Has lower chemotactic activity for neutrophils but none for monocytes and activated lymphocytes. Is a strong suppressor of colony formation by a multipotential hematopoietic progenitor cell line. Binds to CCR3. In Mus musculus (Mouse), this protein is C-C motif chemokine 24.